An 874-amino-acid chain; its full sequence is Alanine--tRNA ligase (874 aa).

Zn(2+)-binding residues include histidine 562, histidine 566, cysteine 665, and histidine 669.

It belongs to the class-II aminoacyl-tRNA synthetase family. Requires Zn(2+) as cofactor.

It is found in the cytoplasm. The enzyme catalyses tRNA(Ala) + L-alanine + ATP = L-alanyl-tRNA(Ala) + AMP + diphosphate. In terms of biological role, catalyzes the attachment of alanine to tRNA(Ala) in a two-step reaction: alanine is first activated by ATP to form Ala-AMP and then transferred to the acceptor end of tRNA(Ala). Also edits incorrectly charged Ser-tRNA(Ala) and Gly-tRNA(Ala) via its editing domain. This is Alanine--tRNA ligase from Pseudomonas entomophila (strain L48).